A 764-amino-acid polypeptide reads, in one-letter code: Phenylalanine--tRNA ligase beta subunit (764 aa).

The tRNA-binding domain maps to 38–148; that stretch reads CIAPKNVVVG…GELVLGKELH (111 aa). Residues 375–455 form the B5 domain; the sequence is LKDCALTFQL…RFVGIDNLVS (81 aa). Mg(2+)-binding residues include D433, D439, E442, and E443. Positions 673–763 constitute an FDX-ACB domain; sequence SIYPSSVRDL…LEKEFNARLK (91 aa).

The protein belongs to the phenylalanyl-tRNA synthetase beta subunit family. Type 1 subfamily. As to quaternary structure, tetramer of two alpha and two beta subunits. Mg(2+) is required as a cofactor.

The protein localises to the cytoplasm. The enzyme catalyses tRNA(Phe) + L-phenylalanine + ATP = L-phenylalanyl-tRNA(Phe) + AMP + diphosphate + H(+). The sequence is that of Phenylalanine--tRNA ligase beta subunit (pheT) from Helicobacter pylori (strain J99 / ATCC 700824) (Campylobacter pylori J99).